The primary structure comprises 72 residues: Translation initiation factor IF-1 (72 aa).

The S1-like domain occupies 1-72 (MAKEDNIEMQ…SKGRIVFRSR (72 aa)).

Belongs to the IF-1 family. As to quaternary structure, component of the 30S ribosomal translation pre-initiation complex which assembles on the 30S ribosome in the order IF-2 and IF-3, IF-1 and N-formylmethionyl-tRNA(fMet); mRNA recruitment can occur at any time during PIC assembly.

It is found in the cytoplasm. Functionally, one of the essential components for the initiation of protein synthesis. Stabilizes the binding of IF-2 and IF-3 on the 30S subunit to which N-formylmethionyl-tRNA(fMet) subsequently binds. Helps modulate mRNA selection, yielding the 30S pre-initiation complex (PIC). Upon addition of the 50S ribosomal subunit IF-1, IF-2 and IF-3 are released leaving the mature 70S translation initiation complex. This Salmonella paratyphi A (strain ATCC 9150 / SARB42) protein is Translation initiation factor IF-1.